The chain runs to 107 residues: Protein TAP1 (107 aa).

A signal peptide spans 1–23 (MESKRVDVLVGLMLIMAIFGVHS).

Stamen.

This chain is Protein TAP1 (TAP1), found in Antirrhinum majus (Garden snapdragon).